The following is a 237-amino-acid chain: Probable glutathione-independent glyoxalase HSP32 (237 aa).

Catalysis depends on residues cysteine 138, histidine 139, and glutamate 170.

The protein belongs to the peptidase C56 family. HSP31-like subfamily. Homodimer.

It localises to the cytoplasm. It is found in the P-body. It carries out the reaction methylglyoxal + H2O = (R)-lactate + H(+). In terms of biological role, catalyzes the conversion of methylglyoxal (MG) to D-lactate in a single glutathione (GSH)-independent step. May play a role in detoxifying endogenously produced glyoxals. Involved in protection against reactive oxygen species (ROS). Important for viability in stationary phase. May negatively regulate TORC1 in response to nutrient limitation. This is Probable glutathione-independent glyoxalase HSP32 from Saccharomyces cerevisiae (strain ATCC 204508 / S288c) (Baker's yeast).